Consider the following 458-residue polypeptide: Transmembrane protein 135 (458 aa).

6 helical membrane passes run 68–88 (ILQSASFLTANGALFMAFFCI), 96–116 (FYLWSPGFGAALPASYVAILV), 149–169 (TLRNGEVLLFCITAAMYMFFF), 298–318 (FQLGAFLGSFVSIYKGTSCFL), 331–351 (IIAGFLAGVSMMFYKSTTISM), and 380–400 (IIYSISTAICFQAAVMEVQTL).

The protein belongs to the TMEM135 family.

The protein localises to the mitochondrion membrane. The protein resides in the peroxisome membrane. In terms of biological role, involved in mitochondrial metabolism by regulating the balance between mitochondrial fusion and fission. May act as a regulator of mitochondrial fission that promotes DNM1L-dependent fission through activation of DNM1L. May be involved in peroxisome organization. In Bos taurus (Bovine), this protein is Transmembrane protein 135.